Reading from the N-terminus, the 80-residue chain is uncharacterized protein (80 aa).

This is an uncharacterized protein from Escherichia coli (Bacteriophage T4).